Here is a 119-residue protein sequence, read N- to C-terminus: ATP-dependent Clp protease adapter protein ClpS (119 aa).

The tract at residues methionine 1 to aspartate 24 is disordered.

It belongs to the ClpS family. Binds to the N-terminal domain of the chaperone ClpA.

Involved in the modulation of the specificity of the ClpAP-mediated ATP-dependent protein degradation. This chain is ATP-dependent Clp protease adapter protein ClpS, found in Gluconobacter oxydans (strain 621H) (Gluconobacter suboxydans).